We begin with the raw amino-acid sequence, 424 residues long: UDP-N-acetylglucosamine 1-carboxyvinyltransferase (424 aa).

22-23 (KN) is a binding site for phosphoenolpyruvate. Position 93 (arginine 93) interacts with UDP-N-acetyl-alpha-D-glucosamine. Residue cysteine 117 is the Proton donor of the active site. 2-(S-cysteinyl)pyruvic acid O-phosphothioketal is present on cysteine 117. UDP-N-acetyl-alpha-D-glucosamine contacts are provided by residues 122-126 (RPIDL), aspartate 307, and valine 329.

It belongs to the EPSP synthase family. MurA subfamily.

The protein localises to the cytoplasm. It carries out the reaction phosphoenolpyruvate + UDP-N-acetyl-alpha-D-glucosamine = UDP-N-acetyl-3-O-(1-carboxyvinyl)-alpha-D-glucosamine + phosphate. Its pathway is cell wall biogenesis; peptidoglycan biosynthesis. Functionally, cell wall formation. Adds enolpyruvyl to UDP-N-acetylglucosamine. The polypeptide is UDP-N-acetylglucosamine 1-carboxyvinyltransferase (Chlorobium luteolum (strain DSM 273 / BCRC 81028 / 2530) (Pelodictyon luteolum)).